Here is a 252-residue protein sequence, read N- to C-terminus: Serine/threonine phosphatase stp (252 aa).

Residues 1–18 (MHAEFRTDRGRIRHHNED) are compositionally biased toward basic and acidic residues. A disordered region spans residues 1–23 (MHAEFRTDRGRIRHHNEDNGGVF). The PPM-type phosphatase domain maps to 2-242 (HAEFRTDRGR…DNITVLLVER (241 aa)). 4 residues coordinate Mn(2+): Asp36, Gly37, Asp194, and Asp233.

It belongs to the PP2C family. Requires Mn(2+) as cofactor.

Its subcellular location is the cytoplasm. The protein resides in the membrane. It catalyses the reaction O-phospho-L-seryl-[protein] + H2O = L-seryl-[protein] + phosphate. The catalysed reaction is O-phospho-L-threonyl-[protein] + H2O = L-threonyl-[protein] + phosphate. Protein phosphatase that dephosphorylates EF-Tu. In Listeria monocytogenes serotype 4b (strain F2365), this protein is Serine/threonine phosphatase stp (stp).